A 456-amino-acid polypeptide reads, in one-letter code: Transforming growth factor beta-1-induced transcript 1 protein (456 aa).

Met1 carries the N-acetylmethionine modification. The interval 1–79 (MEDLDALLSD…ATPPFSSSCG (79 aa)) is disordered. Positions 1–195 (MEDLDALLSD…DTPSPPGPTS (195 aa)) are transcription activation. The segment at 1–235 (MEDLDALLSD…CNKPIAGQVV (235 aa)) is interaction with PTK2B/PYK2. An LD motif 1 motif is present at residues 3-15 (DLDALLSDLETTT). Position 33 is a phosphothreonine (Thr33). A Phosphotyrosine modification is found at Tyr55. The residue at position 63 (Ser63) is a Phosphoserine. The interval 78-131 (CGVLGTGLCELDRLLQELNATQFNITDEIMSQFPSSKETAGEQKEDQSEDKKRP) is interaction with PTK2/FAK1. The LD motif 2 motif lies at 87 to 99 (ELDRLLQELNATQ). The disordered stretch occupies residues 109 to 146 (QFPSSKETAGEQKEDQSEDKKRPSPPPSPSPVLPKPSA). Residues 116–130 (TAGEQKEDQSEDKKR) show a composition bias toward basic and acidic residues. Ser132, Ser136, Ser138, Ser159, Ser181, and Ser189 each carry phosphoserine. The span at 132 to 142 (SPPPSPSPVLP) shows a compositional bias: pro residues. An LD motif 3 motif is present at residues 152–163 (ELDRLMASLSDF). The interval 166 to 200 (QNHLPASGPTPPPVPSSMSEDTPSPPGPTSKGSLD) is disordered. Positions 198–210 (SLDTMLGLLQSDL) match the LD motif 4 motif. LIM zinc-binding domains follow at residues 221 to 280 (GLCG…RFSP), 281 to 338 (RCGL…QLFA), 339 to 398 (PRCQ…RRGS), and 399 to 456 (LCAT…KLFG). Ser398 carries the post-translational modification Phosphoserine. The residue at position 402 (Thr402) is a Phosphothreonine.

It belongs to the paxillin family. Homooligomer. Interacts with CRIP2, HSPB1, ILK, LIMS1, LIMS2, NCK2, NUDT16L1, PAK, PPARG, PTPN12, TCF3, TCF7L2 and VCL. Forms a complex with GIT1 and ARHGEF7. Interacts with AR/androgen receptor in a ligand-dependent manner. Interacts with CSK, LYN, MAPK15, NR3C1, PPARG, PTK2/FAK1, PTK2B/PYK2, SLC6A3, SLC6A4, SMAD3, SRC and talin. Interacts (via LIM zinc-binding domain 2) with CBLC (via RING-type zinc finger); the interaction is direct and enhances CBLC E3 ubiquitin-protein ligase activity. In terms of processing, phosphorylated by gonadotropin-releasing hormone-activated SRC.

The protein localises to the cell junction. It localises to the focal adhesion. The protein resides in the nucleus matrix. Its subcellular location is the cytoplasm. It is found in the cytoskeleton. In terms of biological role, functions as a molecular adapter coordinating multiple protein-protein interactions at the focal adhesion complex and in the nucleus. Links various intracellular signaling modules to plasma membrane receptors and regulates the Wnt and TGFB signaling pathways. May also regulate SLC6A3 and SLC6A4 targeting to the plasma membrane hence regulating their activity. In the nucleus, functions as a nuclear receptor coactivator regulating glucocorticoid, androgen, mineralocorticoid and progesterone receptor transcriptional activity. May play a role in the processes of cell growth, proliferation, migration, differentiation and senescence. May have a zinc-dependent DNA-binding activity. The protein is Transforming growth factor beta-1-induced transcript 1 protein (TGFB1I1) of Bos taurus (Bovine).